An 864-amino-acid chain; its full sequence is A-kinase anchor protein 3 (864 aa).

Residue serine 12 is modified to Phosphoserine; by STK33. Residues 125–138 (VSFYANRLTNLVIA) are PKA-RII subunit binding domain. Disordered regions lie at residues 190–235 (NISS…DKPG) and 251–281 (AGDA…DFSN). Polar residues predominate over residues 204-218 (SGSSQAPGLRYTSTL). Serine 206 is modified (phosphoserine). Residues 219-235 (KIKESTKEGKCPDDKPG) are compositionally biased toward basic and acidic residues. Phosphoserine is present on serine 405. Tyrosine 406 bears the Phosphotyrosine mark. The disordered stretch occupies residues 619–638 (VHEQNTQEEEIHPCERPKTP). Basic and acidic residues predominate over residues 627–638 (EEIHPCERPKTP).

It belongs to the AKAP110 family. In terms of assembly, interacts with ROPN1 and ROPN1L. Interacts with QRICH2. In terms of processing, phosphorylated by STK33 during sperm flagella assembly. Phosphorylated on tyrosine.

It is found in the cytoplasmic vesicle. The protein resides in the secretory vesicle. It localises to the acrosome. Its subcellular location is the cell projection. The protein localises to the cilium. It is found in the flagellum. Its function is as follows. Structural component of sperm fibrous sheath. Required for the formation of the subcellular structure of the sperm flagellum, sperm motility and male fertility. This Mus musculus (Mouse) protein is A-kinase anchor protein 3.